The primary structure comprises 83 residues: Cytochrome b559 subunit alpha (83 aa).

The helical transmembrane segment at 21–35 threads the bilayer; it reads VIHSITIPSLFIAGW. Residue His23 coordinates heme.

It belongs to the PsbE/PsbF family. In terms of assembly, heterodimer of an alpha subunit and a beta subunit. PSII is composed of 1 copy each of membrane proteins PsbA, PsbB, PsbC, PsbD, PsbE, PsbF, PsbH, PsbI, PsbJ, PsbK, PsbL, PsbM, PsbT, PsbX, PsbY, PsbZ, Psb30/Ycf12, at least 3 peripheral proteins of the oxygen-evolving complex and a large number of cofactors. It forms dimeric complexes. Heme b serves as cofactor.

The protein resides in the plastid. Its subcellular location is the chloroplast thylakoid membrane. This b-type cytochrome is tightly associated with the reaction center of photosystem II (PSII). PSII is a light-driven water:plastoquinone oxidoreductase that uses light energy to abstract electrons from H(2)O, generating O(2) and a proton gradient subsequently used for ATP formation. It consists of a core antenna complex that captures photons, and an electron transfer chain that converts photonic excitation into a charge separation. The sequence is that of Cytochrome b559 subunit alpha from Staurastrum punctulatum (Green alga).